Consider the following 206-residue polypeptide: Thymidylate kinase (206 aa).

10 to 17 is a binding site for ATP; it reads GIDGAGKS.

Belongs to the thymidylate kinase family.

It carries out the reaction dTMP + ATP = dTDP + ADP. Its function is as follows. Phosphorylation of dTMP to form dTDP in both de novo and salvage pathways of dTTP synthesis. The chain is Thymidylate kinase (tmk) from Neisseria meningitidis serogroup B (strain ATCC BAA-335 / MC58).